Consider the following 492-residue polypeptide: Probable endopolygalacturonase D (492 aa).

The first 16 residues, 1–16 (MKRSALILSFLPLVFG), serve as a signal peptide directing secretion. The cysteines at positions 151 and 166 are disulfide-linked. 4 PbH1 repeats span residues 216 to 238 (GTSV…AYWD), 258 to 280 (MYNS…EIES), 281 to 319 (TEHL…DIKE), and 320 to 341 (SSYF…AVTS). Asparagine 292 carries N-linked (GlcNAc...) asparagine glycosylation. Aspartate 334 serves as the catalytic Proton donor. Residues cysteine 336 and cysteine 352 are joined by a disulfide bond. The active site involves histidine 356. PbH1 repeat units lie at residues 371-392 (VNGV…RIKT), 400-422 (VYNI…DVQQ), and 434-478 (TNGV…SITG). 2 N-linked (GlcNAc...) asparagine glycosylation sites follow: asparagine 407 and asparagine 441. 2 disulfide bridges follow: cysteine 461-cysteine 466 and cysteine 484-cysteine 491.

The protein belongs to the glycosyl hydrolase 28 family.

It is found in the secreted. The catalysed reaction is (1,4-alpha-D-galacturonosyl)n+m + H2O = (1,4-alpha-D-galacturonosyl)n + (1,4-alpha-D-galacturonosyl)m.. Functionally, involved in maceration and soft-rotting of plant tissue. Hydrolyzes the 1,4-alpha glycosidic bonds of de-esterified pectate in the smooth region of the plant cell wall. The protein is Probable endopolygalacturonase D (pgaD) of Aspergillus oryzae (strain ATCC 42149 / RIB 40) (Yellow koji mold).